Reading from the N-terminus, the 150-residue chain is Large ribosomal subunit protein uL11 (150 aa).

Belongs to the universal ribosomal protein uL11 family. As to quaternary structure, part of the ribosomal stalk of the 50S ribosomal subunit. Interacts with L10 and the large rRNA to form the base of the stalk. L10 forms an elongated spine to which L12 dimers bind in a sequential fashion forming a multimeric L10(L12)X complex. Post-translationally, one or more lysine residues are methylated.

Functionally, forms part of the ribosomal stalk which helps the ribosome interact with GTP-bound translation factors. This Cereibacter sphaeroides (strain ATCC 17025 / ATH 2.4.3) (Rhodobacter sphaeroides) protein is Large ribosomal subunit protein uL11.